A 109-amino-acid chain; its full sequence is ATP-dependent Clp protease adapter protein ClpS 2 (109 aa).

The segment at 1–24 (MAGDGGRSGPSTPSTSVITKTKPR) is disordered.

It belongs to the ClpS family. As to quaternary structure, binds to the N-terminal domain of the chaperone ClpA.

Its function is as follows. Involved in the modulation of the specificity of the ClpAP-mediated ATP-dependent protein degradation. The protein is ATP-dependent Clp protease adapter protein ClpS 2 of Rhodopseudomonas palustris (strain ATCC BAA-98 / CGA009).